The sequence spans 531 residues: Dimethylnonatriene synthase (531 aa).

Residues 6 to 26 (TMSVAMALAAAIFVVLCSVVA) form a helical membrane-spanning segment. C464 provides a ligand contact to heme.

It belongs to the cytochrome P450 family. Heme serves as cofactor.

It is found in the membrane. It catalyses the reaction (6E,10E)-geranyllinalool + reduced [NADPH--hemoprotein reductase] + O2 = (3E,7E)-4,8,12-trimethyltrideca 1,3,7,11-tetraene + but-3-en-2-one + oxidized [NADPH--hemoprotein reductase] + 2 H2O + H(+). The catalysed reaction is (3S,6E)-nerolidol + reduced [NADPH--hemoprotein reductase] + O2 = (3E)-4,8-dimethylnona-1,3,7-triene + but-3-en-2-one + oxidized [NADPH--hemoprotein reductase] + 2 H2O + H(+). It participates in secondary metabolite biosynthesis; terpenoid biosynthesis. Involved in the biosynthesis of homoterpenes, attractants of herbivores parasitoids and predators (e.g. predatory mites and parasitoid wasps). Component of the volatile terpenes biosynthesis pathways. Converts mainly nerolidol to dimethylnonatriene (DMNT) and, to a lower extent, geranyllinalool to trimethyltridecatetraene (TMTT). The sequence is that of Dimethylnonatriene synthase from Zea mays (Maize).